We begin with the raw amino-acid sequence, 477 residues long: MSIPRLKSYLTMFAAVLMLGQVLTAQAEEALPDFTSLVEQASPAVVNISTKQKLPDRRIAAGQMPDLEGLPPMFREFFERNMPQQPRSPRGDRQREAQSLGSGFIISSDGYVLTNNHVVADADEIIVRLSDRSELQAKLVGTDPRTDVALLKVEGKNLPIVKLGDSEKLKVGEWVLAIGSPFGFDHSVTKGIVSAKGRTLPNDTYVPFIQTDVAINPGNSGGPLFNMKGEVVGINSQIFTRSGGFMGLSFAIPIDVAIDVSNQLKKDGKVSRGWLGVVIQEVNKDLAESFGLDKPAGALVAQVLENGPAAKGGLQVGDVILSMNGQPIVMSADLPHLVGGLKDGEKAKLEIIRNGKRQNLDISVGALPDDDADIGTGAEGSAERSSNRLGVSVADLTAEQKKSLELKGGVVIKEVQDGPAAMIGLRPGDVISHLNNQAIGSAKEFTEIAKELPKNRSVSMRVLRQGRASFITFKLAE.

The first 27 residues, 1-27 (MSIPRLKSYLTMFAAVLMLGQVLTAQA), serve as a signal peptide directing secretion. Residues histidine 117, aspartate 147, and serine 220 each act as charge relay system in the active site. Residues 218 to 220 (GNS) and 275 to 279 (LGVVI) contribute to the substrate site. 2 PDZ domains span residues 264–355 (LKKD…IRNG) and 361–466 (DISV…LRQG).

Belongs to the peptidase S1C family.

The protein localises to the periplasm. It catalyses the reaction Acts on substrates that are at least partially unfolded. The cleavage site P1 residue is normally between a pair of hydrophobic residues, such as Val-|-Val.. Might be efficient in the degradation of transiently denatured and unfolded proteins which accumulate in the periplasm following stress conditions. The polypeptide is Probable periplasmic serine endoprotease DegP-like (Pseudomonas putida (strain GB-1)).